A 703-amino-acid polypeptide reads, in one-letter code: WPP domain-interacting tail-anchored protein 1 (703 aa).

Positions 1-12 are enriched in basic and acidic residues; the sequence is METETEHDRTVS. 2 disordered regions span residues 1–27 and 86–107; these read METE…SSTK and FVSK…DDDS. Positions 92 to 107 are enriched in acidic residues; sequence EDEEEPSSNVDDDDDS. Positions 118–183 form a coiled coil; the sequence is SSILNSEVKE…MEQVVEMKKQ (66 aa). Residues 189-208 form a disordered region; sequence RLSSGLDEQGSWSGGQTSVS. Over residues 198 to 208 the composition is skewed to polar residues; the sequence is GSWSGGQTSVS. Coiled coils occupy residues 236-265, 318-461, and 500-604; these read LEKS…MKLY, KRED…RDKG, and STVS…SREN. Residues 679-699 traverse the membrane as a helical segment; it reads FKHILVAILVILISSIAYVIS.

Homodimer. Component of Ran complexes at least composed of WIT1 or WIT2, RANGAP1 or RANGAP2, and WIP1 or WIP2 or WIP3. Interacts with WIP2, WPP1/MAF1, WPP2/MAF2, RANGAP1 and RANGAP2. Component of a ternary complex composed of WPP1, HSP70-1 and WIT1. Interacts with KAKU1. Interacts with WIP1. Ubiquitous.

Its subcellular location is the nucleus envelope. The protein localises to the nucleus membrane. Functionally, together with WIT2, required for the nuclear envelope docking of RANGAP proteins in root tips. The protein is WPP domain-interacting tail-anchored protein 1 (WIT1) of Arabidopsis thaliana (Mouse-ear cress).